A 427-amino-acid polypeptide reads, in one-letter code: Peptidase B (427 aa).

Lysine 195 and aspartate 200 together coordinate Mn(2+). The active site involves lysine 207. 3 residues coordinate Mn(2+): aspartate 218, aspartate 277, and glutamate 279. The active site involves arginine 281.

This sequence belongs to the peptidase M17 family. Homohexamer. Mn(2+) serves as cofactor.

It is found in the cytoplasm. It carries out the reaction Release of an N-terminal amino acid, Xaa, from a peptide or arylamide. Xaa is preferably Glu or Asp but may be other amino acids, including Leu, Met, His, Cys and Gln.. Its function is as follows. Probably plays an important role in intracellular peptide degradation. In Shigella flexneri, this protein is Peptidase B.